Here is a 410-residue protein sequence, read N- to C-terminus: Phospho-N-acetylmuramoyl-pentapeptide-transferase (410 aa).

Helical transmembrane passes span 23–43 (YITF…TIYG), 73–93 (TPTM…FLFA), 96–116 (HNIY…IGFV), 132–152 (GIFK…VLYF), 215–235 (WAWL…SNGA), 248–268 (TSAV…NIIF), 285–305 (VFIS…SFPA), 307–327 (VFMG…LAIA), 332–352 (ILIV…IIQV), and 387–407 (KIVT…IVTL).

The protein belongs to the glycosyltransferase 4 family. MraY subfamily. Mg(2+) serves as cofactor.

The protein resides in the cell inner membrane. The enzyme catalyses UDP-N-acetyl-alpha-D-muramoyl-L-alanyl-gamma-D-glutamyl-meso-2,6-diaminopimeloyl-D-alanyl-D-alanine + di-trans,octa-cis-undecaprenyl phosphate = di-trans,octa-cis-undecaprenyl diphospho-N-acetyl-alpha-D-muramoyl-L-alanyl-D-glutamyl-meso-2,6-diaminopimeloyl-D-alanyl-D-alanine + UMP. It participates in cell wall biogenesis; peptidoglycan biosynthesis. Its function is as follows. Catalyzes the initial step of the lipid cycle reactions in the biosynthesis of the cell wall peptidoglycan: transfers peptidoglycan precursor phospho-MurNAc-pentapeptide from UDP-MurNAc-pentapeptide onto the lipid carrier undecaprenyl phosphate, yielding undecaprenyl-pyrophosphoryl-MurNAc-pentapeptide, known as lipid I. This chain is Phospho-N-acetylmuramoyl-pentapeptide-transferase, found in Flavobacterium johnsoniae (strain ATCC 17061 / DSM 2064 / JCM 8514 / BCRC 14874 / CCUG 350202 / NBRC 14942 / NCIMB 11054 / UW101) (Cytophaga johnsonae).